The chain runs to 781 residues: Catenin beta-1 (781 aa).

An N-acetylalanine modification is found at Ala2. Positions 2-23 (ATQADLMELDMAMEPDRKAAVS) are interaction with VCL. The residue at position 23 (Ser23) is a Phosphoserine; by GSK3-beta; alternate. O-linked (GlcNAc) serine; alternate glycosylation is present at Ser23. Ser29 is subject to Phosphoserine; by GSK3-beta. Ser33 and Ser37 each carry phosphoserine; by GSK3-beta and HIPK2. The segment at 34–57 (GIHSGATTTAPSLSGKGNPEEEDV) is disordered. Phosphothreonine; by GSK3-beta is present on Thr41. Residue Ser45 is modified to Phosphoserine. Lys49 carries the post-translational modification N6-acetyllysine. The residue at position 64 (Tyr64) is a Phosphotyrosine; by PTK6. Tyr142 carries the phosphotyrosine; by FYN and PTK6 modification. 12 ARM repeats span residues 151 to 191 (RAIP…IMRS), 193 to 234 (QMVS…IFKS), 235 to 276 (GGIP…VRLA), 277 to 318 (GGLQ…ILAS), 319 to 360 (GGPQ…IVEA), 361 to 389 (GGMQ…RNLS), 400 to 441 (GLLG…VCQV), 442 to 484 (GGIE…AQNA), 489 to 530 (YGLP…LREQ), 531 to 571 (GAIP…EIVE), 594 to 636 (NTIP…AEGA), and 637 to 666 (TAPL…SEDK). Residues 156-178 (LTKLLNDEDQVVVNKAAVMVHQL) are interaction with BCL9. Ser191 bears the Phosphoserine mark. Residue Ser246 is modified to Phosphoserine; by CDK5. 2 positions are modified to phosphotyrosine: Tyr331 and Tyr333. Position 552 is a phosphoserine; by AMPK (Ser552). Residue Thr556 is modified to Phosphothreonine. At Cys619 the chain carries S-nitrosocysteine. Ser675 carries the post-translational modification Phosphoserine. The segment at 720 to 781 (HSGGYGQDAL…NQLAWFDTDL (62 aa)) is disordered. A compositionally biased stretch (basic and acidic residues) spans 734–745 (MMEHEMGGHHPG). The segment at 772-781 (NQLAWFDTDL) is interaction with SCRIB.

This sequence belongs to the beta-catenin family. As to quaternary structure, two separate complex-associated pools are found in the cytoplasm. The majority is present as component of an E-cadherin/ catenin adhesion complex composed of at least E-cadherin/CDH1 and beta-catenin/CTNNB1, and possibly alpha-catenin/CTNNA1; the complex is located to adherens junctions. The stable association of CTNNA1 is controversial as CTNNA1 was shown not to bind to F-actin when assembled in the complex. Alternatively, the CTNNA1-containing complex may be linked to F-actin by other proteins such as LIMA1. Binds NHERF1. Interacts with PTPRU (via the cytoplasmic juxtamembrane domain) and with EMD. Interacts with SESTD1 and TRPC4. Interacts with CAV1. Interacts with PTPRJ. Interacts with PKT7. Interacts with FAT1 (via the cytoplasmic domain). Interacts with CDK2, NDRG2 and NANOS1. Interacts with NEK2 and CDK5. Interacts with CARM1, CXADR, PCDH11Y and PTK6. Interacts with RAPGEF2. Interacts with SOX7; this interaction may lead to proteasomal degradation of active CTNNB1 and thus inhibition of Wnt/beta-catenin-stimulated transcription. Identified in a complex with HINT1 and MITF. Interacts with FHIT. Interacts with FERMT2. Identified in a complex with TCF4 and FERMT2. Another cytoplasmic pool is part of a large complex containing AXIN1, AXIN2, APC, CSNK1A1 and GSK3B that promotes phosphorylation on N-terminal Ser and Thr residues and ubiquitination of CTNNB1 via BTRC and its subsequent degradation by the proteasome. Wnt-dependent activation of DVL antagonizes the action of GSK3B. When GSK3B activity is inhibited the complex dissociates, CTNNB1 is dephosphorylated and is no longer targeted for destruction. The stabilized protein translocates to the nucleus, where it binds TCF/LEF-1 family members, BCL9, BCL9L and possibly also RUVBL1 and CHD8. Interacts with TAX1BP3 (via the PDZ domain); this interaction inhibits the transcriptional activity of CTNNB1. Interacts with AJAP1, BAIAP1 and CTNNA3. Interacts with TRPV4; the TRPV4 and CTNNB1 complex can interact with CDH1. Interacts with VCL. The CTNNB1 and TCF4 complex interacts with PML. Interacts with XIRP1. Binds CTNNBIP and EP300. CTNNB1 forms a ternary complex with LEF1 and EP300 that is disrupted by CTNNBIP1 binding. Interacts directly with AXIN1; the interaction is regulated by CDK2 phosphorylation of AXIN1. Interacts with GLIS2. Interacts with SCRIB. Interacts with TNIK and TCF7L2. Interacts with SLC30A9. Interacts with RORA. May interact with P-cadherin/CDH3. Interacts with RNF220. Interacts with CTNND2. Interacts (via the C-terminal region) with CBY1. The complex composed, at least, of APC, CTNNB1 and GSK3B interacts with JPT1; the interaction requires the inactive form of GSK3B (phosphorylated at 'Ser-9'). Interacts with DLG5. Interacts with FAM53B; promoting translocation to the nucleus. Interacts with TMEM170B. Interacts with AHI1. Interacts with GID8. Component of an cadherin:catenin adhesion complex composed of at least of CDH26, beta-catenin/CTNNB1, alpha-catenin/CTNNA1 and p120 catenin/CTNND1. Forms a complex comprising APPL1, RUVBL2, APPL2, HDAC1 and HDAC2. Interacts with IRF2BPL; mediates the ubiquitination and degradation of CTNNB1. Interacts with AMFR. Interacts with LMBR1L. Interacts with SOX30; prevents interaction of CTNNB1 with TCF7L2/TCF4 and leads to inhibition of Wnt signaling. Interacts with SOX9; inhibiting CTNNB1 activity by competing with the binding sites of TCF/LEF within CTNNB1, thereby inhibiting the Wnt signaling. Interacts with SPN/CD43 cytoplasmic tail. Interacts (when phosphorylated at Tyr-333) with isoform M2 of PKM (PKM2); promoting transcription activation. Interacts with PKP2 (via HEAD domain). Interacts with CDH1. Interacts (when unphosphorylated) with FLYWCH1, perhaps preventing interaction of CTNNB1 with TCF4, and thereby regulating transcription activation; phosphorylation of CTNNB1 may inhibit the interaction. Interacts (via the central armadillo domains) with probable transcriptional regulator ADNP (via N-terminal region); interaction is direct and stabilizes CTNNB1 by modulating its phosphorylation by glycogen synthase kinase-3 beta GSK3B. Interacts with NR5A2. Interacts with DSG2; the interaction promotes localization of CTNNB1 at cell junctions thus reducing its nuclear localization and subsequent transcription of CTNNB1/TCF-target genes. Phosphorylation at Ser-552 by AMPK promotes stabilization of the protein, enhancing TCF/LEF-mediated transcription. Phosphorylation by GSK3B requires prior phosphorylation of Ser-45 by another kinase. Phosphorylation proceeds then from Thr-41 to Ser-37 and Ser-33. Phosphorylated by NEK2. EGF stimulates tyrosine phosphorylation. Phosphorylated on Ser-33 and Ser-37 by HIPK2 and GSK3B, this phosphorylation triggers proteasomal degradation. Phosphorylation on Ser-191 and Ser-246 by CDK5. Phosphorylation by CDK2 regulates insulin internalization. Phosphorylation by PTK6 at Tyr-64, Tyr-142, Tyr-331 and/or Tyr-333 with the predominant site at Tyr-64 is not essential for inhibition of transcriptional activity. Phosphorylation by SRC at Tyr-333 promotes interaction with isoform M2 of PKM (PKM2); promoting transcription activation. In terms of processing, ubiquitinated by the SCF(BTRC) E3 ligase complex when phosphorylated by GSK3B, leading to its degradation. Ubiquitinated by a E3 ubiquitin ligase complex containing UBE2D1, SIAH1, CACYBP/SIP, SKP1, APC and TBL1X, leading to its subsequent proteasomal degradation. Ubiquitinated and degraded following interaction with SOX9. Ubiquitinated via 'Lys-11'- and 'Lys-29'-linked ubiquitin chains by UBR5, leading to its stabilization. Post-translationally, S-nitrosylation at Cys-619 within adherens junctions promotes VEGF-induced, NO-dependent endothelial cell permeability by disrupting interaction with E-cadherin, thus mediating disassembly adherens junctions. O-glycosylation at Ser-23 decreases nuclear localization and transcriptional activity, and increases localization to the plasma membrane and interaction with E-cadherin CDH1. In terms of processing, deacetylated at Lys-49 by SIRT1. In terms of tissue distribution, expressed in cerebellar granule neurons (at protein level). Expressed in the intestinal epithelium (at protein level). Abundantly expressed in the tooth, skin, lung, kidney, eye and brain with weak expression in the liver and heart.

The protein localises to the cytoplasm. Its subcellular location is the nucleus. The protein resides in the cytoskeleton. It is found in the cell junction. It localises to the adherens junction. The protein localises to the cell membrane. Its subcellular location is the microtubule organizing center. The protein resides in the centrosome. It is found in the spindle pole. It localises to the synapse. The protein localises to the cilium basal body. Key downstream component of the canonical Wnt signaling pathway. In the absence of Wnt, forms a complex with AXIN1, AXIN2, APC, CSNK1A1 and GSK3B that promotes phosphorylation on N-terminal Ser and Thr residues and ubiquitination of CTNNB1 via BTRC and its subsequent degradation by the proteasome. In the presence of Wnt ligand, CTNNB1 is not ubiquitinated and accumulates in the nucleus, where it acts as a coactivator for transcription factors of the TCF/LEF family, leading to activate Wnt responsive genes. Also acts as a coactivator for other transcription factors, such as NR5A2. Promotes epithelial to mesenchymal transition/mesenchymal to epithelial transition (EMT/MET) via driving transcription of CTNNB1/TCF-target genes. Involved in the regulation of cell adhesion, as component of an E-cadherin:catenin adhesion complex. Acts as a negative regulator of centrosome cohesion. Involved in the CDK2/PTPN6/CTNNB1/CEACAM1 pathway of insulin internalization. Blocks anoikis of malignant kidney and intestinal epithelial cells and promotes their anchorage-independent growth by down-regulating DAPK2. Disrupts PML function and PML-NB formation by inhibiting RANBP2-mediated sumoylation of PML. Promotes neurogenesis by maintaining sympathetic neuroblasts within the cell cycle. Involved in chondrocyte differentiation via interaction with SOX9: SOX9-binding competes with the binding sites of TCF/LEF within CTNNB1, thereby inhibiting the Wnt signaling. Acts as a positive regulator of odontoblast differentiation during mesenchymal tooth germ formation, via promoting the transcription of differentiation factors such as LEF1, BMP2 and BMP4. Activity is repressed in a MSX1-mediated manner at the bell stage of mesenchymal tooth germ formation which prevents premature differentiation of odontoblasts. The chain is Catenin beta-1 from Mus musculus (Mouse).